A 101-amino-acid chain; its full sequence is Small ribosomal subunit protein uS14 (101 aa).

It belongs to the universal ribosomal protein uS14 family. As to quaternary structure, part of the 30S ribosomal subunit. Contacts proteins S3 and S10.

Its function is as follows. Binds 16S rRNA, required for the assembly of 30S particles and may also be responsible for determining the conformation of the 16S rRNA at the A site. The polypeptide is Small ribosomal subunit protein uS14 (Chlamydia pneumoniae (Chlamydophila pneumoniae)).